We begin with the raw amino-acid sequence, 47 residues long: Delta-ctenitoxin-Asp2e (47 aa).

Cystine bridges form between Cys3–Cys17, Cys10–Cys23, Cys14–Cys46, Cys16–Cys31, and Cys25–Cys29.

Expressed by the venom gland.

It is found in the secreted. Functionally, inhibits the inactivation of voltage-gated sodium channels (Nav). The protein is Delta-ctenitoxin-Asp2e of Ancylometes sp. (South American fishing spider).